The primary structure comprises 2677 residues: Probable helicase senataxin (2677 aa).

Lys339 is covalently cross-linked (Glycyl lysine isopeptide (Lys-Gly) (interchain with G-Cter in SUMO1)). 3 positions are modified to phosphoserine: Ser615, Ser642, and Ser878. Lys894 is covalently cross-linked (Glycyl lysine isopeptide (Lys-Gly) (interchain with G-Cter in SUMO2)). 5 positions are modified to phosphoserine: Ser911, Ser947, Ser956, Ser1017, and Ser1019. Residues Lys1056 and Lys1063 each participate in a glycyl lysine isopeptide (Lys-Gly) (interchain with G-Cter in SUMO2) cross-link. Disordered regions lie at residues 1158-1219 (KKPK…TTVS) and 1237-1258 (PVSK…RSSN). A compositionally biased stretch (polar residues) spans 1176-1187 (PSSSVRNEGQSD). The span at 1188 to 1205 (TNKRDLVGNDFKSIDRRT) shows a compositional bias: basic and acidic residues. Positions 1206-1219 (STPNSRIQRATTVS) are enriched in polar residues. Phosphoserine is present on Ser1330. Residues Lys1340 and Lys1341 each participate in a glycyl lysine isopeptide (Lys-Gly) (interchain with G-Cter in SUMO2) cross-link. Residues 1351 to 1385 (QRQIRPKSQKNRRRLSDCESTDVKRAGSHTAQNSD) are disordered. Positions 1354 to 1363 (IRPKSQKNRR) are enriched in basic residues. Residues 1364 to 1375 (RLSDCESTDVKR) are compositionally biased toward basic and acidic residues. Ser1366 carries the post-translational modification Phosphoserine. Residue Lys1415 forms a Glycyl lysine isopeptide (Lys-Gly) (interchain with G-Cter in SUMO2) linkage. The residue at position 1489 (Ser1489) is a Phosphoserine. Residues 1579-1604 (FRKPGLPPPASKPLRPTTKIFSSKST) are disordered. Phosphoserine is present on residues Ser1621, Ser1623, and Ser1663. 1963–1970 (GPPGTGKS) provides a ligand contact to ATP. Positions 2070 to 2087 (KKELPSHVQAMHKRKEFL) match the Bipartite nuclear localization signal motif. The stretch at 2105–2136 (REIQRQELDENISKVSKERQELASKIKEVQGR) forms a coiled coil. Thr2474 bears the Phosphothreonine mark. Disordered stretches follow at residues 2474-2496 (THPP…SKLD), 2556-2577 (WDPQ…EPGF), and 2597-2677 (LSSH…RKLL). Pro residues predominate over residues 2560–2573 (PSSPQHPGATPPTG). Over residues 2628–2671 (ELCHRREARAFSEGEQEKCGSETHHTRRNSRWDKRTLEQEDSSS) the composition is skewed to basic and acidic residues. The necessary for nuclear localization stretch occupies residues 2661–2677 (KRTLEQEDSSSKKRKLL).

It belongs to the DNA2/NAM7 helicase family. Homodimer. Interacts with PER2; the interaction inhibits termination of circadian target genes. Interacts with CHD4, POLR2A, PRKDC and TRIM28. Interacts with UBE2I. Interacts (via N-terminus domain) with EXOSC9 (via C-terminus region); the interaction enhances SETX sumoylation. Interacts with NCL (via N-terminus domain). Interacts with PABPN1, PABPC1 and SF3B1. Interacts with SMN1/SMN2 and POLR2A; SMN1/SMN2 recruits SETX to POLR2A. Post-translationally, ubiquitinated. Sumoylated preferentially with SUMO2 or SUMO3. In terms of tissue distribution, highly expressed in skeletal muscle. Expressed in heart, fibroblast, placenta and liver. Weakly expressed in brain and lung. Expressed in the cortex of the kidney (highly expressed in tubular epithelial cells but low expression in the glomerulus).

The protein localises to the nucleus. It localises to the nucleoplasm. It is found in the nucleolus. Its subcellular location is the cytoplasm. The protein resides in the chromosome. The protein localises to the telomere. It localises to the cell projection. It is found in the axon. Its subcellular location is the growth cone. Its function is as follows. Probable RNA/DNA helicase involved in diverse aspects of RNA metabolism and genomic integrity. Plays a role in transcription regulation by its ability to modulate RNA Polymerase II (Pol II) binding to chromatin and through its interaction with proteins involved in transcription. Contributes to the mRNA splicing efficiency and splice site selection. Required for the resolution of R-loop RNA-DNA hybrid formation at G-rich pause sites located downstream of the poly(A) site, allowing XRN2 recruitment and XRN2-mediated degradation of the downstream cleaved RNA and hence efficient RNA polymerase II (RNAp II) transcription termination. Required for the 3' transcriptional termination of PER1 and CRY2, thus playing an important role in the circadian rhythm regulation. Involved in DNA double-strand breaks damage response generated by oxidative stress. In association with RRP45, targets the RNA exosome complex to sites of transcription-induced DNA damage. Plays a role in the development and maturation of germ cells: essential for male meiosis, acting at the interface of transcription and meiotic recombination, and in the process of gene silencing during meiotic sex chromosome inactivation (MSCI). May be involved in telomeric stability through the regulation of telomere repeat-containing RNA (TERRA) transcription. Plays a role in neurite outgrowth in hippocampal cells through FGF8-activated signaling pathways. Inhibits retinoic acid-induced apoptosis. The protein is Probable helicase senataxin of Homo sapiens (Human).